The chain runs to 193 residues: MKLLEERILKDGDVLGENILKVDSFLTHQVDFELMQEIGKVFADKYKEAGITKVVTIEASGIAPAVYAAQALGVPMIFAKKAKNITMTEGILTAEVYSFTKQVTSQVSIVSRFLSNDDTVLIIDDFLANGQAAKGLLEIIGQAGAKVAGIGIVIEKSFQDGRDLLEKTGVPVTSLARIKAFENGRVVFAEADA.

2 residues coordinate xanthine: leucine 20 and threonine 27. 128–132 (ANGQA) is a binding site for 5-phospho-alpha-D-ribose 1-diphosphate. Residue lysine 156 participates in xanthine binding.

This sequence belongs to the purine/pyrimidine phosphoribosyltransferase family. Xpt subfamily. As to quaternary structure, homodimer.

Its subcellular location is the cytoplasm. The enzyme catalyses XMP + diphosphate = xanthine + 5-phospho-alpha-D-ribose 1-diphosphate. It participates in purine metabolism; XMP biosynthesis via salvage pathway; XMP from xanthine: step 1/1. Functionally, converts the preformed base xanthine, a product of nucleic acid breakdown, to xanthosine 5'-monophosphate (XMP), so it can be reused for RNA or DNA synthesis. This chain is Xanthine phosphoribosyltransferase, found in Streptococcus agalactiae serotype Ia (strain ATCC 27591 / A909 / CDC SS700).